The following is a 607-amino-acid chain: Glutamine--fructose-6-phosphate aminotransferase [isomerizing] (607 aa).

Cys2 acts as the Nucleophile; for GATase activity in catalysis. One can recognise a Glutamine amidotransferase type-2 domain in the interval 2 to 217 (CGIIGIIGRE…EGDWVVLTRE (216 aa)). SIS domains follow at residues 283–422 (PDFD…VKGQ) and 455–597 (VATA…VDQP). Lys602 acts as the For Fru-6P isomerization activity in catalysis.

As to quaternary structure, homodimer.

The protein resides in the cytoplasm. It carries out the reaction D-fructose 6-phosphate + L-glutamine = D-glucosamine 6-phosphate + L-glutamate. Functionally, catalyzes the first step in hexosamine metabolism, converting fructose-6P into glucosamine-6P using glutamine as a nitrogen source. This chain is Glutamine--fructose-6-phosphate aminotransferase [isomerizing], found in Zymomonas mobilis subsp. mobilis (strain ATCC 31821 / ZM4 / CP4).